Consider the following 201-residue polypeptide: Large ribosomal subunit protein uL4 (201 aa).

Positions 43–69 (TKAQKTRSEVAGGGKKPWRQKGTGRAR) are disordered.

Belongs to the universal ribosomal protein uL4 family. As to quaternary structure, part of the 50S ribosomal subunit.

Functionally, one of the primary rRNA binding proteins, this protein initially binds near the 5'-end of the 23S rRNA. It is important during the early stages of 50S assembly. It makes multiple contacts with different domains of the 23S rRNA in the assembled 50S subunit and ribosome. In terms of biological role, forms part of the polypeptide exit tunnel. This Idiomarina loihiensis (strain ATCC BAA-735 / DSM 15497 / L2-TR) protein is Large ribosomal subunit protein uL4.